We begin with the raw amino-acid sequence, 546 residues long: Probable protein kinase UbiB (546 aa).

In terms of domain architecture, Protein kinase spans 123-501 (DFDETPLASA…SRRQGQARYL (379 aa)). ATP contacts are provided by residues 129–137 (LASASIAQV) and Lys152. Catalysis depends on Asp287, which acts as the Proton acceptor. 2 helical membrane passes run 496-516 (GQARYLLGVGASLLLVGVFLL) and 521-541 (HIEWGQISLAGAGLCWLLGWF).

Belongs to the ABC1 family. UbiB subfamily.

Its subcellular location is the cell inner membrane. It functions in the pathway cofactor biosynthesis; ubiquinone biosynthesis [regulation]. Its function is as follows. Is probably a protein kinase regulator of UbiI activity which is involved in aerobic coenzyme Q (ubiquinone) biosynthesis. In Aeromonas salmonicida (strain A449), this protein is Probable protein kinase UbiB.